Here is a 133-residue protein sequence, read N- to C-terminus: Ribosome-binding factor A (133 aa).

This sequence belongs to the RbfA family. In terms of assembly, monomer. Binds 30S ribosomal subunits, but not 50S ribosomal subunits or 70S ribosomes.

Its subcellular location is the cytoplasm. Its function is as follows. One of several proteins that assist in the late maturation steps of the functional core of the 30S ribosomal subunit. Associates with free 30S ribosomal subunits (but not with 30S subunits that are part of 70S ribosomes or polysomes). Required for efficient processing of 16S rRNA. May interact with the 5'-terminal helix region of 16S rRNA. The sequence is that of Ribosome-binding factor A from Acinetobacter baumannii (strain ACICU).